Reading from the N-terminus, the 507-residue chain is Transcription factor SOX-9 (507 aa).

Disordered stretches follow at residues 1–67 (MNLL…SEED) and 160–250 (RLRV…AGKV). Residues 30–41 (SAGSPCPSGSGS) are compositionally biased toward low complexity. The span at 42-52 (DTENTRPQENT) shows a compositional bias: polar residues. 2 stretches are compositionally biased toward basic and acidic residues: residues 56–67 (GEPDLKKESEED) and 160–174 (RLRV…DYKY). The interval 63–103 (ESEEDKFPVCIREAVSQVLKGYDWTLVPMPVRVNGSSKNKP) is dimerization (DIM). Residues 63 to 103 (ESEEDKFPVCIREAVSQVLKGYDWTLVPMPVRVNGSSKNKP) are PQA. Serine 64 is subject to Phosphoserine; by PKA. The segment at residues 105–173 (VKRPMNAFMV…QHKKDHPDYK (69 aa)) is a DNA-binding region (HMG box). A Phosphoserine; by PKA modification is found at serine 211. The transactivation domain (TAM) stretch occupies residues 224-307 (PGEHSGQSQG…LPPNGHPGVP (84 aa)). 2 consecutive short sequence motifs (9aaTAD) follow at residues 275–284 (IGELSSDVIS) and 290–298 (DVNEFDQYL). The interval 335–429 (WMSKQQAPPP…PFNLPHYSPS (95 aa)) is disordered. A compositionally biased stretch (pro residues) spans 341–369 (APPPPPQQPPQAPQAPQAPPQQQAPPQQP). Residues 378 to 420 (HTLTTLSSEPGQSQRTHIKTEQLSPSHYSEQQQHSPQQISYSP) show a composition bias toward polar residues. The tract at residues 392-507 (RTHIKTEQLS…QPVYTQLTRP (116 aa)) is transactivation domain (TAC). Lysine 396 is covalently cross-linked (Glycyl lysine isopeptide (Lys-Gly) (interchain with G-Cter in ubiquitin)). Residues 458–466 (SGLYSTFTY) carry the 9aaTAD 3 motif. The tract at residues 477–507 (PIADTSGVPSIPQTHSPQHWEQPVYTQLTRP) is disordered. The segment covering 483-507 (GVPSIPQTHSPQHWEQPVYTQLTRP) has biased composition (polar residues).

In terms of assembly, homodimer; homodimerization is required for activity. Interacts (via C-terminus) with ZNF219; forming a complex that binds to the COL2A1 promoter and activates COL2A1 expression. Interacts with DDRGK1. Interacts with EP300/p300. Interacts with beta-catenin (CTNNB1); inhibiting CTNNB1 activity by competing with the binding sites of TCF/LEF within CTNNB1. Acetylated; acetylation impairs nuclear localization and ability to transactivate expression of target genes. Deacetylated by SIRT1. In terms of processing, phosphorylation at Ser-64 and Ser-211 by PKA increases transcriptional activity and may help delay chondrocyte maturation downstream of PTHLH/PTHrP signaling. Phosphorylation at either Ser-64 or Ser-211 is required for sumoylation, but phosphorylation is not dependent on sumoylation. Phosphorylated on tyrosine residues; tyrosine dephosphorylation by PTPN11/SHP2 blocks SOX9 phosphorylation by PKA and subsequent SUMOylation. Post-translationally, sumoylated; phosphorylation at either Ser-64 or Ser-211 is required for sumoylation. Sumoylation is induced by BMP signaling pathway. Ubiquitinated; ubiquitination leads to proteasomal degradation and is negatively regulated by DDRGK1. As to expression, expressed in the intestinal epithelium (at protein level). Expressed in progenitor cells in various organs, including chondroprogenitors, osteoprogenitors and preadipocytes, but is not expressed in most differentiated cell types such as osteoblasts and adipocytes, with the exception of chondrocytes. Highly expressed in developing chondrogenic tissues. Also expressed in some non-chondrogenic tissues such as notochord, otic vesicle and neural tube.

Its subcellular location is the nucleus. Its function is as follows. Transcription factor that plays a key role in chondrocytes differentiation and skeletal development. Specifically binds the 5'-ACAAAG-3' DNA motif present in enhancers and super-enhancers and promotes expression of genes important for chondrogenesis, including cartilage matrix protein-coding genes COL2A1, COL4A2, COL9A1, COL11A2 and ACAN, SOX5 and SOX6. Also binds to some promoter regions. Plays a central role in successive steps of chondrocyte differentiation. Absolutely required for precartilaginous condensation, the first step in chondrogenesis during which skeletal progenitors differentiate into prechondrocytes. Together with SOX5 and SOX6, required for overt chondrogenesis when condensed prechondrocytes differentiate into early stage chondrocytes, the second step in chondrogenesis. Later, required to direct hypertrophic maturation and block osteoblast differentiation of growth plate chondrocytes: maintains chondrocyte columnar proliferation, delays prehypertrophy and then prevents osteoblastic differentiation of chondrocytes by lowering beta-catenin (CTNNB1) signaling and RUNX2 expression. Also required for chondrocyte hypertrophy, both indirectly, by keeping the lineage fate of chondrocytes, and directly, by remaining present in upper hypertrophic cells and transactivating COL10A1 along with MEF2C. Low lipid levels are the main nutritional determinant for chondrogenic commitment of skeletal progenitor cells: when lipids levels are low, FOXO (FOXO1 and FOXO3) transcription factors promote expression of SOX9, which induces chondrogenic commitment and suppresses fatty acid oxidation. Mechanistically, helps, but is not required, to remove epigenetic signatures of transcriptional repression and deposit active promoter and enhancer marks at chondrocyte-specific genes. Acts in cooperation with the Hedgehog pathway-dependent GLI (GLI1 and GLI3) transcription factors. In addition to cartilage development, also acts as a regulator of proliferation and differentiation in epithelial stem/progenitor cells: involved in the lung epithelium during branching morphogenesis, by balancing proliferation and differentiation and regulating the extracellular matrix. Controls epithelial branching during kidney development. This is Transcription factor SOX-9 from Mus musculus (Mouse).